The following is a 435-amino-acid chain: MSGYQRRPGATPLSRARSLAIPDAPAFYERRSCLPQLNCERPHGRDLDSPFFGIRPAFMCYVPSPVLASVGDTDFGYGKGKCSKQSPSGAHGTHFGDDRFEDLEEANPFSFREFLKTKNLGLSKEDPASRIYAKEASRHSLGLDHNSPPSQTGGYGLEYQQPFFEDPTGAGDLLDEEEDEDTGWSGAYLPSAIEQTHPERVPAGTSPCSTYLSFFSTPSELAGPESLPSWALSDTDSRVSPASPAGSPSADFAVHGESLGDRHLRTLQISYDALKDENSKLRRKLNEVQSFSEAQTEMVRTLERKLEAKMIKEESDYHDLESVVQQVEQNLELMTKRAVKAENHVVKLKQEISLLQAQVSNFQRENEALRCGQGASLTVVKQNADVALQNLRVVMNSAQASIKQLVSGAETLNLVAEILKSIDRISEVKDEEEDS.

Phosphoserine is present on residues serine 18 and serine 147. Disordered stretches follow at residues 136–185 (ASRH…TGWS) and 225–251 (ESLPSWALSDTDSRVSPASPAGSPSAD). Over residues 173 to 182 (LLDEEEDEDT) the composition is skewed to acidic residues. A required for interaction with PTPN13 region spans residues 173–198 (LLDEEEDEDTGWSGAYLPSAIEQTHP). The segment covering 240 to 250 (SPASPAGSPSA) has biased composition (low complexity). A phosphoserine mark is found at serine 243 and serine 247. A coiled-coil region spans residues 261 to 371 (DRHLRTLQIS…FQRENEALRC (111 aa)).

It belongs to the ENTR1 family. Found in a complex with ENTR1, PTPN13 and GIT1. Interacts with PTPN13 (via the FERM domain). Interacts (via N-terminus) with GIT1 (via N- and C-terminus); this interaction is direct. Interacts with NOD2. Interacts (via N-terminus) with IFT88. Interacts with VPS35. Phosphorylated. In terms of tissue distribution, expressed in the colon (at protein level).

It localises to the cytoplasm. Its subcellular location is the early endosome. It is found in the endosome. The protein resides in the recycling endosome. The protein localises to the midbody. It localises to the cytoskeleton. Its subcellular location is the microtubule organizing center. It is found in the centrosome. The protein resides in the cilium basal body. Its function is as follows. Endosome-associated protein that plays a role in membrane receptor sorting, cytokinesis and ciliogenesis. Involved in the endosome-to-plasma membrane trafficking and recycling of SNX27-retromer-dependent cargo proteins, such as GLUT1. Involved in the regulation of cytokinesis; the function may involve PTPN13 and GIT1. Plays a role in the formation of cilia. Involved in cargo protein localization, such as PKD2, at primary cilia. Involved in the presentation of the tumor necrosis factor (TNF) receptor TNFRSF1A on the cell surface, and hence in the modulation of the TNF-induced apoptosis. This chain is Endosome-associated-trafficking regulator 1, found in Homo sapiens (Human).